The primary structure comprises 473 residues: NAD-dependent protein deacetylase SRT1 (473 aa).

The Deacetylase sirtuin-type domain occupies Ser27–Lys267. Residues Gly52–Trp71 and Gln114–Asp117 contribute to the NAD(+) site. His134 acts as the Proton acceptor in catalysis. Residues Cys142, Cys145, Cys167, and Cys172 each coordinate Zn(2+). NAD(+) contacts are provided by residues Gly209–Ser211, Asn235–Gln237, and Val253. The interval Leu447–Ala473 is disordered. Basic residues predominate over residues Ser453–Lys465.

It belongs to the sirtuin family. Class IV subfamily. Binds to the promoter region of genes influenced by ethylene. Interacts with ENAP1; this interaction is enhanced in the presence of ethylene. Zn(2+) serves as cofactor.

The protein resides in the nucleus. It carries out the reaction N(6)-acetyl-L-lysyl-[protein] + NAD(+) + H2O = 2''-O-acetyl-ADP-D-ribose + nicotinamide + L-lysyl-[protein]. NAD-dependent protein deacetylase. Has deacetylase activity towards H3K9Ac. May have a function in the safeguard against genome instability and DNA damage to ensure plant cell growth. Involved in responses to ethylene leading to the transcriptional repression of some ethylene-responsive genes via the regulation of histone acetylation H3K9Ac. The protein is NAD-dependent protein deacetylase SRT1 of Arabidopsis thaliana (Mouse-ear cress).